A 368-amino-acid chain; its full sequence is MFRQSIVKQSCRFLATKKQPSIGRYTGKPNPKTGKYTVSFIEGDGVGPEISKSVKAIFSAAKVPIEWESCDVSPIFVNGLTTIPDPAVASINKNLIALKGPLATPIGKGHRSLNLTLRKTFGLFANVRPAKSIEGYKTTYENVNLVLIRENTEGEYSGIEHVVAPGVVQSIKLITQDASERVIRYAFEYARAVDRSKVLVVHKSTIQRLADGLFVDVAKKLSSEYPDIELQTELLDNTVLKTVQHPEAYDDVVVVCPNLYGDILSDLNSGLSAGSLGLTPSANIGHTVSIFEAVHGSAPDIAGQNKANPTALLLSSVMMLNHMGLTEHADKIEKAVLTTIASDAKNRTGDLGGSASTSSFTDAVIERL.

The transit peptide at 1–14 (MFRQSIVKQSCRFL) directs the protein to the mitochondrion. Substrate-binding residues include R118, R128, R149, and D236. Residues D236, D262, and D266 each contribute to the Mg(2+) site.

This sequence belongs to the isocitrate and isopropylmalate dehydrogenases family. In terms of assembly, octamer of two non-identical subunits IDH1 and IDH2. It depends on Mg(2+) as a cofactor. Mn(2+) serves as cofactor.

The protein localises to the mitochondrion. It catalyses the reaction D-threo-isocitrate + NAD(+) = 2-oxoglutarate + CO2 + NADH. In terms of biological role, performs an essential role in the oxidative function of the citric acid cycle. This chain is Isocitrate dehydrogenase [NAD] subunit 2, mitochondrial (IDH2), found in Kluyveromyces lactis (strain ATCC 8585 / CBS 2359 / DSM 70799 / NBRC 1267 / NRRL Y-1140 / WM37) (Yeast).